The chain runs to 445 residues: Cyclic GMP-AMP phosphodiesterase SMPDL3A (445 aa).

An N-terminal signal peptide occupies residues 1-22; the sequence is MALLGNFLCCLLVAWLCGPGLG. The Zn(2+) site is built by Asp-42 and His-44. An intrachain disulfide couples Cys-59 to Cys-78. An N-linked (GlcNAc...) asparagine glycan is attached at Asn-66. Asp-107 contacts Zn(2+). His-111 serves as a coordination point for ATP. N-linked (GlcNAc...) asparagine glycosylation occurs at Asn-128. Residue Asn-148 coordinates Zn(2+). 2 residues coordinate ATP: Asn-148 and His-149. 2 N-linked (GlcNAc...) asparagine glycosylation sites follow: Asn-219 and Asn-235. A Zn(2+)-binding site is contributed by His-249. An ATP-binding site is contributed by Tyr-257. His-290 and His-292 together coordinate Zn(2+). Asn-353 and Asn-364 each carry an N-linked (GlcNAc...) asparagine glycan. 2 cysteine pairs are disulfide-bonded: Cys-417-Cys-421 and Cys-427-Cys-440.

It belongs to the acid sphingomyelinase family. In terms of assembly, monomer. Homodimer; homodimerizes following 2',3'-cGAMP-binding. Requires Zn(2+) as cofactor. Post-translationally, N-glycosylated. In terms of tissue distribution, detected in blood serum (at protein level).

It localises to the secreted. The catalysed reaction is 2',3'-cGAMP + H2O = 5'-pGpA(2'-5') + H(+). It catalyses the reaction 5'-pGpA(2'-5') + H2O = 5'-GpA(2'-5') + phosphate. It carries out the reaction a ribonucleoside 5'-triphosphate + H2O = a ribonucleoside 5'-diphosphate + phosphate + H(+). The enzyme catalyses ATP + H2O = ADP + phosphate + H(+). With respect to regulation, requires micromolar levels of Zn(2+) for activity. Inhibited by millimolar levels of Zn(2+). Functionally, cyclic-nucleotide phosphodiesterase that acts as a negative regulator of innate immunity by mediating degradation of 2',3'-cGAMP, thereby inhibiting the cGAS-STING signaling. Specifically linearizes 2',3'-cGAMP into 2'5'-bond pGpA and further hydrolyzes pGpA to produce GpA. Also has in vitro nucleotide phosphodiesterase activity with nucleoside triphosphates, such as ATP. Has in vitro activity with p-nitrophenyl-TMP. Has lower activity with nucleoside diphosphates, and no activity with nucleoside monophosphates. Has in vitro activity with CDP-choline, giving rise to CMP and phosphocholine. Has in vitro activity with CDP-ethanolamine. Does not have sphingomyelin phosphodiesterase activity. The sequence is that of Cyclic GMP-AMP phosphodiesterase SMPDL3A from Mus musculus (Mouse).